We begin with the raw amino-acid sequence, 257 residues long: Phosphonates import ATP-binding protein PhnC (257 aa).

An ABC transporter domain is found at 4–248 (IEFKDVRKVY…AFNEIYGRSI (245 aa)). ATP is bound at residue 37 to 44 (GLSGSGKS).

It belongs to the ABC transporter superfamily. Phosphonates importer (TC 3.A.1.9.1) family. In terms of assembly, the complex is composed of two ATP-binding proteins (PhnC), two transmembrane proteins (PhnE) and a solute-binding protein (PhnD).

The protein localises to the cell membrane. It carries out the reaction phosphonate(out) + ATP + H2O = phosphonate(in) + ADP + phosphate + H(+). Functionally, part of the ABC transporter complex PhnCDE involved in phosphonates import. Responsible for energy coupling to the transport system. This Staphylococcus saprophyticus subsp. saprophyticus (strain ATCC 15305 / DSM 20229 / NCIMB 8711 / NCTC 7292 / S-41) protein is Phosphonates import ATP-binding protein PhnC.